A 171-amino-acid polypeptide reads, in one-letter code: Ribosome maturation factor RimM (171 aa).

Residues 96-170 (AEGEYYYHEI…LVTIHVTEGL (75 aa)) form the PRC barrel domain.

It belongs to the RimM family. As to quaternary structure, binds ribosomal protein uS19.

The protein localises to the cytoplasm. In terms of biological role, an accessory protein needed during the final step in the assembly of 30S ribosomal subunit, possibly for assembly of the head region. Essential for efficient processing of 16S rRNA. May be needed both before and after RbfA during the maturation of 16S rRNA. It has affinity for free ribosomal 30S subunits but not for 70S ribosomes. The protein is Ribosome maturation factor RimM of Bacillus anthracis (strain A0248).